The primary structure comprises 500 residues: NAD(P)H-quinone oxidoreductase chain 4, chloroplastic (500 aa).

The next 14 helical transmembrane spans lie at 4–24 (FPWL…IFFL), 35–55 (YTIC…CYHF), 87–107 (LGPV…AWPV), 113–130 (LFHF…GSFS), 134–154 (LLLF…LLSM), 167–187 (FILY…GVGL), 207–227 (VALE…KLPI), 242–262 (HYST…YGLI), 272–292 (AHSI…IYAA), 305–325 (IAYS…SITD), 330–350 (GAIL…FLAG), 386–406 (LALP…GIIT), 416–436 (IAIT…LLSM), and 462–482 (LFVS…PDFV).

This sequence belongs to the complex I subunit 4 family.

It localises to the plastid. Its subcellular location is the chloroplast thylakoid membrane. It carries out the reaction a plastoquinone + NADH + (n+1) H(+)(in) = a plastoquinol + NAD(+) + n H(+)(out). The catalysed reaction is a plastoquinone + NADPH + (n+1) H(+)(in) = a plastoquinol + NADP(+) + n H(+)(out). The sequence is that of NAD(P)H-quinone oxidoreductase chain 4, chloroplastic from Helianthus annuus (Common sunflower).